The sequence spans 141 residues: Phosphoribosyl-AMP cyclohydrolase (141 aa).

Asp-91 is a binding site for Mg(2+). Cys-92 lines the Zn(2+) pocket. The Mg(2+) site is built by Asp-93 and Asp-95. Residues Cys-110 and Cys-117 each coordinate Zn(2+).

The protein belongs to the PRA-CH family. Homodimer. Requires Mg(2+) as cofactor. It depends on Zn(2+) as a cofactor.

It is found in the cytoplasm. The catalysed reaction is 1-(5-phospho-beta-D-ribosyl)-5'-AMP + H2O = 1-(5-phospho-beta-D-ribosyl)-5-[(5-phospho-beta-D-ribosylamino)methylideneamino]imidazole-4-carboxamide. The protein operates within amino-acid biosynthesis; L-histidine biosynthesis; L-histidine from 5-phospho-alpha-D-ribose 1-diphosphate: step 3/9. Functionally, catalyzes the hydrolysis of the adenine ring of phosphoribosyl-AMP. The sequence is that of Phosphoribosyl-AMP cyclohydrolase from Brucella anthropi (strain ATCC 49188 / DSM 6882 / CCUG 24695 / JCM 21032 / LMG 3331 / NBRC 15819 / NCTC 12168 / Alc 37) (Ochrobactrum anthropi).